Reading from the N-terminus, the 294-residue chain is Cell division control protein 2 homolog A (294 aa).

The region spanning 4 to 287 (YEKVEKIGEG…ARNALQHEYF (284 aa)) is the Protein kinase domain. Residues 10–18 (IGEGTYGVV) and Lys33 each bind ATP. Position 14 is a phosphothreonine (Thr14). The residue at position 15 (Tyr15) is a Phosphotyrosine. Catalysis depends on Asp127, which acts as the Proton acceptor. The residue at position 161 (Thr161) is a Phosphothreonine; by CAK.

Belongs to the protein kinase superfamily. CMGC Ser/Thr protein kinase family. CDC2/CDKX subfamily.

It catalyses the reaction L-seryl-[protein] + ATP = O-phospho-L-seryl-[protein] + ADP + H(+). It carries out the reaction L-threonyl-[protein] + ATP = O-phospho-L-threonyl-[protein] + ADP + H(+). The catalysed reaction is [DNA-directed RNA polymerase] + ATP = phospho-[DNA-directed RNA polymerase] + ADP + H(+). Its activity is regulated as follows. Phosphorylation at Thr-14 or Tyr-15 inactivates the enzyme, while phosphorylation at Thr-161 activates it. Its function is as follows. Plays a key role in the control of the eukaryotic cell cycle. This chain is Cell division control protein 2 homolog A (CDC2A), found in Antirrhinum majus (Garden snapdragon).